A 347-amino-acid polypeptide reads, in one-letter code: UDP-N-acetylenolpyruvoylglucosamine reductase (347 aa).

In terms of domain architecture, FAD-binding PCMH-type spans 33–221 (AGGSAERIYL…SGAWFALPRD (189 aa)). R180 is an active-site residue. Residue S250 is the Proton donor of the active site. E320 is a catalytic residue.

Belongs to the MurB family. FAD is required as a cofactor.

It is found in the cytoplasm. The catalysed reaction is UDP-N-acetyl-alpha-D-muramate + NADP(+) = UDP-N-acetyl-3-O-(1-carboxyvinyl)-alpha-D-glucosamine + NADPH + H(+). It participates in cell wall biogenesis; peptidoglycan biosynthesis. In terms of biological role, cell wall formation. The sequence is that of UDP-N-acetylenolpyruvoylglucosamine reductase from Nitrosospira multiformis (strain ATCC 25196 / NCIMB 11849 / C 71).